Here is a 255-residue protein sequence, read N- to C-terminus: uncharacterized protein (255 aa).

The N-terminal stretch at 1 to 23 (MKRLNKLVLGINLLFLVISITAG) is a signal peptide. Cysteine 24 carries N-palmitoyl cysteine lipidation. Cysteine 24 carries the S-diacylglycerol cysteine lipid modification.

It belongs to the staphylococcal tandem lipoprotein family.

The protein resides in the cell membrane. This is an uncharacterized protein from Staphylococcus aureus (strain MRSA252).